The chain runs to 73 residues: Small ribosomal subunit protein uS15c (73 aa).

Belongs to the universal ribosomal protein uS15 family. Part of the 30S ribosomal subunit.

It localises to the plastid. The protein localises to the chloroplast. This is Small ribosomal subunit protein uS15c (rps15) from Welwitschia mirabilis (Tree tumbo).